A 1909-amino-acid polypeptide reads, in one-letter code: Receptor-type tyrosine-protein phosphatase F (1909 aa).

The signal sequence occupies residues 1–31; it reads MVPNTCTSVPLLPVGLPLLLLLSCIQFSSQA. The Extracellular segment spans residues 32–1266; sequence DSLPNFVRSP…RSVDQPEMLW (1235 aa). 3 consecutive Ig-like C2-type domains span residues 35-125, 137-225, and 233-315; these read PNFV…AKLT, PTID…ANLY, and PRFS…AQVS. A disulfide bond links Cys-56 and Cys-109. Heparin is bound at residue 68-77; that stretch reads WMKKGKKVSS. N-linked (GlcNAc...) asparagine glycosylation occurs at Asn-119. An intrachain disulfide couples Cys-158 to Cys-208. Asn-251 and Asn-296 each carry an N-linked (GlcNAc...) asparagine glycan. The cysteines at positions 254 and 299 are disulfide-linked. 8 Fibronectin type-III domains span residues 322 to 412, 417 to 511, 515 to 604, 609 to 706, 711 to 819, 820 to 914, 918 to 1013, and 1014 to 1098; these read PPTS…TGEQ, PPLH…TQQG, QPSS…TAQS, PPQD…TNED, PPRK…TTGA, VPGK…PEDV, FPLN…TSPA, and FATS…TAPD. The segment at 399–418 is disordered; it reads GPPSEPVETRTGEQAPSSPP. Asn-721 is a glycosylation site (N-linked (GlcNAc...) asparagine). Asn-963 and Asn-966 each carry an N-linked (GlcNAc...) asparagine glycan. The chain crosses the membrane as a helical span at residues 1267–1287; that stretch reads VMGPVLAVVLIIIIVIAILLF. The Cytoplasmic portion of the chain corresponds to 1288–1909; the sequence is KRKRASPLPK…YLGSFDHYAT (622 aa). Tyrosine-protein phosphatase domains are found at residues 1354–1609 and 1641–1900; these read FSQE…LLEA and MELE…ALEY. Substrate contacts are provided by residues Asp-1518, 1550–1556, and Gln-1594; that span reads CSAGVGR. Catalysis depends on Cys-1550, which acts as the Phosphocysteine intermediate. Cys-1841 serves as the catalytic Phosphocysteine intermediate.

The protein belongs to the protein-tyrosine phosphatase family. Receptor class 2A subfamily.

The protein resides in the membrane. It catalyses the reaction O-phospho-L-tyrosyl-[protein] + H2O = L-tyrosyl-[protein] + phosphate. Functionally, possible cell adhesion receptor. It possesses an intrinsic protein tyrosine phosphatase activity (PTPase). The first PTPase domain has enzymatic activity, while the second one seems to affect the substrate specificity of the first one. This Danio rerio (Zebrafish) protein is Receptor-type tyrosine-protein phosphatase F (ptprf).